Reading from the N-terminus, the 32-residue chain is Glutathione S-transferase 8.2 (32 aa).

A glutathione-binding site is contributed by 21-22 (QS).

This sequence belongs to the GST superfamily. Alpha family. Homodimer. The N-terminus is blocked.

It localises to the cytoplasm. The enzyme catalyses RX + glutathione = an S-substituted glutathione + a halide anion + H(+). Conjugation of reduced glutathione to a wide number of exogenous and endogenous hydrophobic electrophiles. This chain is Glutathione S-transferase 8.2, found in Dicentrarchus labrax (European seabass).